The sequence spans 161 residues: SsrA-binding protein (161 aa).

A disordered region spans residues 1–23; it reads MATKKNEQIKGRTDGLVAENRRS.

Belongs to the SmpB family.

Its subcellular location is the cytoplasm. Its function is as follows. Required for rescue of stalled ribosomes mediated by trans-translation. Binds to transfer-messenger RNA (tmRNA), required for stable association of tmRNA with ribosomes. tmRNA and SmpB together mimic tRNA shape, replacing the anticodon stem-loop with SmpB. tmRNA is encoded by the ssrA gene; the 2 termini fold to resemble tRNA(Ala) and it encodes a 'tag peptide', a short internal open reading frame. During trans-translation Ala-aminoacylated tmRNA acts like a tRNA, entering the A-site of stalled ribosomes, displacing the stalled mRNA. The ribosome then switches to translate the ORF on the tmRNA; the nascent peptide is terminated with the 'tag peptide' encoded by the tmRNA and targeted for degradation. The ribosome is freed to recommence translation, which seems to be the essential function of trans-translation. The protein is SsrA-binding protein of Hyphomonas neptunium (strain ATCC 15444).